A 620-amino-acid chain; its full sequence is Sorbicillinoid biosynthetic cluster transcription factor 1 (620 aa).

The zn(2)-C6 fungal-type DNA-binding region spans 10 to 37 (CEECRRRKARCDRVRPQCGICADAGRTC). Residues 285–308 (HDDETSPNENSGSCPSVSPSTTQN) are disordered. Residues 291-308 (PNENSGSCPSVSPSTTQN) show a composition bias toward polar residues.

Its subcellular location is the nucleus. Transcription factor that acts as the main regulator of the gene cluster that mediates the biosynthesis of sorbicillinoids, a diverse group of yellow secondary metabolites that restrict growth of competing pathogenic fungi but not of bacteria. In Penicillium rubens (strain ATCC 28089 / DSM 1075 / NRRL 1951 / Wisconsin 54-1255) (Penicillium chrysogenum), this protein is Sorbicillinoid biosynthetic cluster transcription factor 1.